We begin with the raw amino-acid sequence, 316 residues long: Dehydrogenase/reductase SDR family protein 7-like (316 aa).

Topologically, residues 1 to 18 (MFFYKIIYFIGFPYIVLR) are cytoplasmic. The chain crosses the membrane as a helical; Signal-anchor for type II membrane protein span at residues 19–39 (LIVSIILPIASLYFIYCNFIA). Residues 40-316 (PKLREKPESS…HKFASSSVKK (277 aa)) lie on the Peroxisomal side of the membrane. Position 56 to 80 (56 to 80 (IITGASSGIGAELAKKYARLGCKVT)) interacts with NAD(+). A substrate-binding site is contributed by serine 194. Tyrosine 207 (proton acceptor) is an active-site residue.

This sequence belongs to the short-chain dehydrogenases/reductases (SDR) family.

It localises to the peroxisome membrane. Its function is as follows. Putative oxidoreductase. The sequence is that of Dehydrogenase/reductase SDR family protein 7-like from Dictyostelium discoideum (Social amoeba).